A 24-amino-acid chain; its full sequence is NLVSDIIGSKKHMEKLISIIKKCR.

Arg24 bears the Arginine amide mark.

As to quaternary structure, homodimer; disulfide-linked. Expressed by the skin glands.

The protein resides in the secreted. Its function is as follows. Antimicrobial peptide. Active against Gram-negative bacteria E.coli ATCC 25922 (MIC=1.5 uM) and P.aeruginosa ATTC 27853 (MIC=23.2 uM) and against Gram-positive bacterium S.aureus ATCC 29313 (MIC=11.6 uM). Has no hemolytic activity. Associates with and disrupts membranes in vitro. The protein is Homotarsinin of Phyllomedusa tarsius (Brownbelly leaf frog).